We begin with the raw amino-acid sequence, 684 residues long: Protein ecdysoneless (684 aa).

The span at 491–501 shows a compositional bias: acidic residues; it reads EPELDSDDDEP. Disordered stretches follow at residues 491 to 528 and 603 to 624; these read EPEL…CQRN and TSVG…EDDF.

This sequence belongs to the ECD family. In terms of tissue distribution, expressed in the ecdysone-producing larval ring gland, nervous system, imaginal disks and gonads.

Its subcellular location is the cytoplasm. In terms of biological role, required in both the follicle cells and the germline for oocyte development. The protein is Protein ecdysoneless of Drosophila melanogaster (Fruit fly).